We begin with the raw amino-acid sequence, 554 residues long: Muellerian-inhibiting factor (554 aa).

The first 24 residues, 1 to 24, serve as a signal peptide directing secretion; sequence MQGPHLSPLVLLLATMGAVLQPEA. Positions 25–446 are excised as a propeptide; sequence VENLATNTRG…GREGRGRTGR (422 aa). Residues Asn-62, Asn-326, and Asn-410 are each glycosylated (N-linked (GlcNAc...) asparagine). 3 disulfides stabilise this stretch: Cys-456-Cys-520, Cys-482-Cys-551, and Cys-486-Cys-553.

The protein belongs to the TGF-beta family. As to quaternary structure, homodimer; disulfide-linked. Preproprotein is proteolytically processed to generate N- and C-terminal cleavage products that homodimerize and associate to form a biologically active non-covalent complex. Binding of the non-covalent complex to AMHRII induces dissociation of the pro-region from the mature C-terminal dimer. The N-terminal portion of the protein, despite having no intrinsic activity, has the role of amplifying the activity of the C-terminus. In terms of tissue distribution, expressed in Sertoli cells of fetal testes, and in testes just after birth, but absent in adult testes. In female, AMH is expressed after birth in the granulosa cells of the follicle.

The protein resides in the secreted. In terms of biological role, plays an important role in several reproductive functions, including Muellerian duct regression during male fetal sexua,l differentiation and in the adult plays a role in Leydig cell differentiation and function. In female acts as a negative regulator of the primordial to primary follicle transition and decreases FSH sensitivity of growing follicles. Binds to its sole type II receptor, AMHR2 that recruits type I receptors ACVR1 and BMPR1A which subsequently activates the Smad pathway. This Mus musculus (Mouse) protein is Muellerian-inhibiting factor (Amh).